Here is an 891-residue protein sequence, read N- to C-terminus: Alanine--tRNA ligase (891 aa).

Zn(2+) contacts are provided by histidine 576, histidine 580, cysteine 684, and histidine 688.

It belongs to the class-II aminoacyl-tRNA synthetase family. Zn(2+) serves as cofactor.

It is found in the cytoplasm. It catalyses the reaction tRNA(Ala) + L-alanine + ATP = L-alanyl-tRNA(Ala) + AMP + diphosphate. Catalyzes the attachment of alanine to tRNA(Ala) in a two-step reaction: alanine is first activated by ATP to form Ala-AMP and then transferred to the acceptor end of tRNA(Ala). Also edits incorrectly charged Ser-tRNA(Ala) and Gly-tRNA(Ala) via its editing domain. In Orientia tsutsugamushi (strain Boryong) (Rickettsia tsutsugamushi), this protein is Alanine--tRNA ligase.